The primary structure comprises 341 residues: Thymidine kinase (341 aa).

An ATP-binding site is contributed by 19 to 26 (GAYGIGKT). Catalysis depends on Glu-48, which acts as the Proton acceptor. 2 residues coordinate substrate: Tyr-66 and Gln-90. Arg-183 serves as a coordination point for ATP. Position 189 (Arg-189) interacts with substrate.

The protein belongs to the herpesviridae thymidine kinase family. As to quaternary structure, homodimer.

It catalyses the reaction thymidine + ATP = dTMP + ADP + H(+). Functionally, catalyzes the transfer of the gamma-phospho group of ATP to thymidine to generate dTMP in the salvage pathway of pyrimidine synthesis. The dTMP serves as a substrate for DNA polymerase during viral DNA replication. Allows the virus to be reactivated and to grow in non-proliferative cells lacking a high concentration of phosphorylated nucleic acid precursors. This Varicella-zoster virus (strain Oka vaccine) (HHV-3) protein is Thymidine kinase.